Here is a 232-residue protein sequence, read N- to C-terminus: Large ribosomal subunit protein uL1 (232 aa).

The protein belongs to the universal ribosomal protein uL1 family. Part of the 50S ribosomal subunit.

In terms of biological role, binds directly to 23S rRNA. The L1 stalk is quite mobile in the ribosome, and is involved in E site tRNA release. Functionally, protein L1 is also a translational repressor protein, it controls the translation of the L11 operon by binding to its mRNA. This chain is Large ribosomal subunit protein uL1, found in Ruegeria sp. (strain TM1040) (Silicibacter sp.).